Consider the following 438-residue polypeptide: Leupeptin-inactivating enzyme 1 (438 aa).

Positions 1–37 are cleaved as a signal peptide; it reads MSLSVSRRLAAVTAFAVAGLFASAVPAALAAPSAVAA. The Zn(2+) site is built by His125 and Asp137. Glu171 acts as the Proton acceptor in catalysis. Zn(2+) contacts are provided by Glu172, Asp200, and His287. Cys285 and Cys290 are oxidised to a cystine. One can recognise a P/Homo B domain in the interval 321–438; that stretch reads VPPGQSFENT…GYINSWKITF (118 aa).

The protein belongs to the peptidase M28 family. M28A subfamily. In terms of assembly, monomer. The cofactor is Zn(2+).

Its subcellular location is the secreted. Its activity is regulated as follows. Activity is inhibited by metalloprotease inhibitors and activated by Mg(2+) and Ca(2+). In terms of biological role, a leucine-specific metalloprotease that plays a role in controlling the amount of leupeptin during colony development. Degrades leupeptin into three components, acetyl-leucine, leucine and argininal. Has a strict preference for leucine at the P1 site. The protein is Leupeptin-inactivating enzyme 1 (lieA) of Streptomyces exfoliatus (Streptomyces hydrogenans).